We begin with the raw amino-acid sequence, 306 residues long: Pantothenate kinase (306 aa).

Residue Gly-91–Ser-98 coordinates ATP.

This sequence belongs to the prokaryotic pantothenate kinase family.

The protein resides in the cytoplasm. The enzyme catalyses (R)-pantothenate + ATP = (R)-4'-phosphopantothenate + ADP + H(+). It functions in the pathway cofactor biosynthesis; coenzyme A biosynthesis; CoA from (R)-pantothenate: step 1/5. The protein is Pantothenate kinase of Streptococcus equi subsp. zooepidemicus (strain H70).